The primary structure comprises 390 residues: DNA replication and repair protein RecF (390 aa).

30–37 contacts ATP; the sequence is GDNAQGKS.

It belongs to the RecF family.

It is found in the cytoplasm. The RecF protein is involved in DNA metabolism; it is required for DNA replication and normal SOS inducibility. RecF binds preferentially to single-stranded, linear DNA. It also seems to bind ATP. This Trichodesmium erythraeum (strain IMS101) protein is DNA replication and repair protein RecF.